We begin with the raw amino-acid sequence, 232 residues long: Mediator of RNA polymerase II transcription subunit 18 (232 aa).

This sequence belongs to the Mediator complex subunit 18 family. As to quaternary structure, component of the Mediator complex.

Its subcellular location is the nucleus. Functionally, component of the Mediator complex, a coactivator involved in the regulated transcription of nearly all RNA polymerase II-dependent genes. Mediator functions as a bridge to convey information from gene-specific regulatory proteins to the basal RNA polymerase II transcription machinery. Mediator is recruited to promoters by direct interactions with regulatory proteins and serves as a scaffold for the assembly of a functional preinitiation complex with RNA polymerase II and the general transcription factors. In Caenorhabditis elegans, this protein is Mediator of RNA polymerase II transcription subunit 18 (mdt-18).